A 65-amino-acid polypeptide reads, in one-letter code: MAKNKEIRINVTLECTNCANNSQKSSRGISRYITQKNRRNTPNRLELNKFCPYCVGHTVHKEIKK.

This sequence belongs to the bacterial ribosomal protein bL33 family.

It localises to the plastid. The protein localises to the chloroplast. The sequence is that of Large ribosomal subunit protein bL33c from Zygnema circumcarinatum (Green alga).